The primary structure comprises 159 residues: Dihydrofolate reductase (159 aa).

The 156-residue stretch at 2 to 157 folds into the DHFR domain; the sequence is TLSILVAHDL…IPHTFLHLIR (156 aa). 6-8 contributes to the substrate binding site; sequence LVA. NADP(+)-binding positions include 7-8 and 15-20; these read VA and IGFENQ. Aspartate 28 contributes to the substrate binding site. Residue 44 to 47 participates in NADP(+) binding; the sequence is GRKT. Arginine 58 lines the substrate pocket. Residues 63–66 and 93–98 contribute to the NADP(+) site; these read LTSD and FGGQTL. Threonine 112 is a substrate binding site.

This sequence belongs to the dihydrofolate reductase family.

The catalysed reaction is (6S)-5,6,7,8-tetrahydrofolate + NADP(+) = 7,8-dihydrofolate + NADPH + H(+). It functions in the pathway cofactor biosynthesis; tetrahydrofolate biosynthesis; 5,6,7,8-tetrahydrofolate from 7,8-dihydrofolate: step 1/1. Its function is as follows. Key enzyme in folate metabolism. Catalyzes an essential reaction for de novo glycine and purine synthesis, and for DNA precursor synthesis. This is Dihydrofolate reductase (folA) from Staphylococcus aureus (strain COL).